An 838-amino-acid polypeptide reads, in one-letter code: Periostin (838 aa).

Residues M1–A23 form the signal peptide. The region spanning G42 to A96 is the EMI domain. 5 cysteine pairs are disulfide-bonded: C46-C82, C71-C335, C81-C94, C210-C313, and C469-C474. Position 62 is an S-cysteinyl cysteine (C62). 4 FAS1 domains span residues P99–L232, G236–L367, D370–I494, and E498–L630. Residue N601 is glycosylated (N-linked (GlcNAc...) asparagine). Residues Q811–Q838 form a disordered region. Positions Q826 to Q838 are enriched in basic residues.

As to quaternary structure, homodimer. Interacts with BMP1 and fibronectin. Gamma-carboxylation is controversial. Gamma-carboxyglutamated; gamma-carboxyglutamate residues are formed by vitamin K dependent carboxylation; these residues may be required for binding to calcium. According to a more recent report in human, does not contain vitamin K-dependent gamma-carboxyglutamate residues. As to expression, preferentially expressed in periosteum and periodontal ligament. Also expressed in the developing and adult heart.

Its subcellular location is the golgi apparatus. The protein resides in the secreted. It is found in the extracellular space. The protein localises to the extracellular matrix. Functionally, induces cell attachment and spreading and plays a role in cell adhesion. Enhances incorporation of BMP1 in the fibronectin matrix of connective tissues, and subsequent proteolytic activation of lysyl oxidase LOX. The chain is Periostin (Postn) from Mus musculus (Mouse).